The following is a 146-amino-acid chain: Hemoglobin subunit beta (146 aa).

Residues 2-146 form the Globin domain; sequence QWTAEEKQLI…VAHALARKYH (145 aa). Heme b is bound by residues histidine 63 and histidine 92.

The protein belongs to the globin family. In terms of assembly, heterotetramer of two alpha chains and two beta chains. As to expression, red blood cells.

Functionally, involved in oxygen transport from the lung to the various peripheral tissues. The sequence is that of Hemoglobin subunit beta (HBB) from Turdus merula (Common blackbird).